The sequence spans 74 residues: Small ribosomal subunit protein bS20c (74 aa).

This sequence belongs to the bacterial ribosomal protein bS20 family.

It is found in the plastid. The protein localises to the chloroplast. Functionally, binds directly to 16S ribosomal RNA. This chain is Small ribosomal subunit protein bS20c, found in Cyanidioschyzon merolae (strain NIES-3377 / 10D) (Unicellular red alga).